Reading from the N-terminus, the 785-residue chain is Ubiquitin carboxyl-terminal hydrolase 10 (785 aa).

Composition is skewed to polar residues over residues 113–122 (LTLDSGSNAE) and 262–277 (DTTESLGVTNGQTLES). 2 disordered regions span residues 113–145 (LTLDSGSNAENDGLSGGLGQRERKKKKKRPPGY) and 262–314 (DTTE…ATAT). The segment covering 290–304 (HTVESTDSDQAKPEE) has biased composition (basic and acidic residues). The span at 305–314 (ASPTTEATAT) shows a compositional bias: low complexity. One can recognise a USP domain in the interval 401–782 (RGLINKGNWC…TAYLLYYRRV (382 aa)). Cysteine 410 serves as the catalytic Nucleophile. Residues 537–581 (EKLSVSNGPEVQTVREEEEQDEQGEGSEDEWEQVGPRNKSSVTRQ) are disordered. A compositionally biased stretch (acidic residues) spans 552–568 (EEEEQDEQGEGSEDEWE). The Proton acceptor role is filled by histidine 736.

This sequence belongs to the peptidase C19 family. USP10 subfamily.

It is found in the cytoplasm. The protein resides in the nucleus. It catalyses the reaction Thiol-dependent hydrolysis of ester, thioester, amide, peptide and isopeptide bonds formed by the C-terminal Gly of ubiquitin (a 76-residue protein attached to proteins as an intracellular targeting signal).. Hydrolase that can remove conjugated ubiquitin from target proteins such as p53/TP53, RPS2/us5, RPS3/us3, RPS10/eS10, BECN1, SNX3 and CFTR. Acts as an essential regulator of p53/TP53 stability: in unstressed cells, specifically deubiquitinates p53/TP53 in the cytoplasm, leading to counteracts MDM2 action and stabilize p53/TP53. Following DNA damage, translocates to the nucleus and deubiquitinates p53/TP53, leading to regulate the p53/TP53-dependent DNA damage response. Component of a regulatory loop that controls autophagy and p53/TP53 levels. Plays a key role in 40S ribosome subunit recycling when a ribosome has stalled during translation: acts both by inhibiting formation of stress granules, which store stalled translation pre-initiation complexes, and mediating deubiquitination of 40S ribosome subunits. Deubiquitinates CFTR in early endosomes, enhancing its endocytic recycling. The protein is Ubiquitin carboxyl-terminal hydrolase 10 (USP10) of Gallus gallus (Chicken).